Reading from the N-terminus, the 404-residue chain is Acetate kinase (404 aa).

Asn7 serves as a coordination point for Mg(2+). ATP is bound at residue Lys14. Substrate is bound at residue Arg95. Asp152 functions as the Proton donor/acceptor in the catalytic mechanism. Residues 212-216, 286-288, and 334-338 each bind ATP; these read HLGNG, DMR, and GIGEN. Position 388 (Glu388) interacts with Mg(2+).

Belongs to the acetokinase family. Homodimer. Requires Mg(2+) as cofactor. Mn(2+) serves as cofactor.

Its subcellular location is the cytoplasm. It catalyses the reaction acetate + ATP = acetyl phosphate + ADP. Its pathway is metabolic intermediate biosynthesis; acetyl-CoA biosynthesis; acetyl-CoA from acetate: step 1/2. Catalyzes the formation of acetyl phosphate from acetate and ATP. Can also catalyze the reverse reaction. This is Acetate kinase from Nitratidesulfovibrio vulgaris (strain DSM 19637 / Miyazaki F) (Desulfovibrio vulgaris).